The chain runs to 205 residues: Low-density lipoprotein receptor class A domain-containing protein 1 (205 aa).

A helical membrane pass occupies residues 43 to 63 (LLLLLATVAALIALVTILGLP). The region spanning 71 to 114 (ACITLTNRTGFLCHDQRSCIPASGVCDGVRTCTHGEDEDESLCR) is the LDL-receptor class A 1 domain. Intrachain disulfides connect Cys72/Cys89, Cys83/Cys102, Cys96/Cys113, Cys141/Cys160, Cys163/Cys180, and Cys170/Cys193. The LDL-receptor class A 2; atypical domain maps to 115-161 (DVPQSLPHFLVAHCGDPASWIYSDQKCDGTNNCGDCSDELSPVTVCP). Residues 162 to 203 (PCGPGWWRCPSTFFKYCDCIPRHLCRDHVQHCSDWSDEYACP) enclose the LDL-receptor class A 3; atypical domain.

The protein belongs to the LDLR family.

It is found in the membrane. This is Low-density lipoprotein receptor class A domain-containing protein 1 (LDLRAD1) from Homo sapiens (Human).